The chain runs to 401 residues: Nodulation protein E (401 aa).

The Ketosynthase family 3 (KS3) domain maps to 2–400 (DRRVVITGIG…GTNAVLAFRQ (399 aa)). Catalysis depends on for beta-ketoacyl synthase activity residues cysteine 162, histidine 294, and histidine 331. Residues 329-348 (HAHCLGAASALEMIACVMAI) traverse the membrane as a helical segment.

Belongs to the thiolase-like superfamily. Beta-ketoacyl-ACP synthases family.

The protein localises to the cell inner membrane. Proposed to synthesize NOD factor fatty acyl chain. Involved in the synthesis of a highly unsaturated fatty acid moiety, which forms part of a lipo-oligosaccharide that is responsible for host specificity. This chain is Nodulation protein E (nodE), found in Rhizobium leguminosarum bv. trifolii.